Consider the following 130-residue polypeptide: U-scoloptoxin(16)-Er4a (130 aa).

The first 26 residues, 1 to 26 (MNTVSVVQFLAVGCAVFVLYGRGVFA), serve as a signal peptide directing secretion.

The protein belongs to the scoloptoxin-16 family. Post-translationally, contains 3 disulfide bonds. As to expression, expressed by the venom gland.

It is found in the secreted. This chain is U-scoloptoxin(16)-Er4a, found in Ethmostigmus rubripes (Giant centipede).